The primary structure comprises 554 residues: Peroxisomal membrane protein PEX29 (554 aa).

Over 1–145 (MDSVTNFFWN…PFMIMDELIK (145 aa)) the chain is Cytoplasmic. 2 stretches are compositionally biased toward polar residues: residues 11-22 (DTYNAGTPTRST) and 43-53 (ISSGSRTSDPT). The tract at residues 11 to 73 (DTYNAGTPTR…PTSGGGFPST (63 aa)) is disordered. Over residues 55 to 64 (GSLPSSSGQP) the composition is skewed to low complexity. Residues 146 to 166 (ILNWTNPAYTVSIMFLYTLII) form a helical membrane-spanning segment. Residues 167-172 (LKPFQM) are Peroxisomal-facing. The chain crosses the membrane as a helical span at residues 173 to 193 (LSSLPIFYLLFCVMVPQYLYI). At 194-264 (HKPNPTSYLD…LQKFAFFTNE (71 aa)) the chain is on the cytoplasmic side. Residues 265–285 (AISSFYFIVLLIIATLNFLYM) traverse the membrane as a helical segment. The Peroxisomal segment spans residues 286-287 (DK). The chain crosses the membrane as a helical span at residues 288–308 (FIKLIPMRPVLILLGWGFFIA). Over 309–554 (SHPSNREYLL…ELTDTLNSTI (246 aa)) the chain is Cytoplasmic. Residues 500–532 (GVTKGSMSGGLTHSSDDDRADEESINGTIPNLN) are disordered.

This sequence belongs to the PEX28-32 family. PEX29 subfamily.

Its subcellular location is the peroxisome membrane. Functionally, involved in the regulation of peroxisome number, size and distribution. This chain is Peroxisomal membrane protein PEX29 (PEX29), found in Saccharomyces cerevisiae (strain ATCC 204508 / S288c) (Baker's yeast).